The primary structure comprises 220 residues: Ribose-5-phosphate isomerase A (220 aa).

Residues 28-31 (TGST), 81-84 (DGAD), and 94-97 (KGGG) contribute to the substrate site. Glu-103 (proton acceptor) is an active-site residue. Lys-121 provides a ligand contact to substrate.

Belongs to the ribose 5-phosphate isomerase family. As to quaternary structure, homodimer.

The enzyme catalyses aldehydo-D-ribose 5-phosphate = D-ribulose 5-phosphate. It participates in carbohydrate degradation; pentose phosphate pathway; D-ribose 5-phosphate from D-ribulose 5-phosphate (non-oxidative stage): step 1/1. In terms of biological role, catalyzes the reversible conversion of ribose-5-phosphate to ribulose 5-phosphate. The protein is Ribose-5-phosphate isomerase A of Shewanella baltica (strain OS223).